Here is a 290-residue protein sequence, read N- to C-terminus: Pyridoxal 5'-phosphate synthase subunit PdxS (290 aa).

Residue Asp-22 coordinates D-ribose 5-phosphate. Lys-79 serves as the catalytic Schiff-base intermediate with D-ribose 5-phosphate. Residue Gly-151 coordinates D-ribose 5-phosphate. Arg-163 contributes to the D-glyceraldehyde 3-phosphate binding site. Residues Gly-212 and Gly-233–Ser-234 each bind D-ribose 5-phosphate.

It belongs to the PdxS/SNZ family. As to quaternary structure, in the presence of PdxT, forms a dodecamer of heterodimers.

It catalyses the reaction aldehydo-D-ribose 5-phosphate + D-glyceraldehyde 3-phosphate + L-glutamine = pyridoxal 5'-phosphate + L-glutamate + phosphate + 3 H2O + H(+). The protein operates within cofactor biosynthesis; pyridoxal 5'-phosphate biosynthesis. In terms of biological role, catalyzes the formation of pyridoxal 5'-phosphate from ribose 5-phosphate (RBP), glyceraldehyde 3-phosphate (G3P) and ammonia. The ammonia is provided by the PdxT subunit. Can also use ribulose 5-phosphate and dihydroxyacetone phosphate as substrates, resulting from enzyme-catalyzed isomerization of RBP and G3P, respectively. In Clostridium botulinum (strain Loch Maree / Type A3), this protein is Pyridoxal 5'-phosphate synthase subunit PdxS.